A 244-amino-acid polypeptide reads, in one-letter code: RAD51-like protein 1 (244 aa).

Interacts with brc-2 and rad-51.

It localises to the nucleus. In terms of biological role, has a role in the homologous recombination repair (HRR) of genomic DNA during meiosis. Required for rad-51 recruitment onto ssDNA gaps generated at stalled replication fork barriers. The chain is RAD51-like protein 1 from Caenorhabditis briggsae.